A 569-amino-acid chain; its full sequence is Protein AF-9 (569 aa).

Residues 1 to 138 enclose the YEATS domain; it reads MASSCAVQVK…EDFRRKLLKA (138 aa). Residues 138–476 are disordered; that stretch reads AGGDPNRSIH…PPPPLLKTNN (339 aa). Over residues 149–190 the composition is skewed to low complexity; sequence SSSSSSSSSSSSSSSSSSSSSSSSSSSSSSSSSSSSSSSSSS. Positions 202–265 are enriched in basic and acidic residues; it reads EHKEKPSKDS…PKPMSKEPKA (64 aa). Serine 289 and serine 295 each carry phosphoserine. The Nuclear localization signal signature appears at 296–301; sequence AKKRKK. The segment covering 304-314 has biased composition (low complexity); sequence SEALFKSFSSA. Basic and acidic residues predominate over residues 323–350; that stretch reads ADKKQIKDKSHVKMGKVKIESETSEKKK. Lysine 340 is covalently cross-linked (Glycyl lysine isopeptide (Lys-Gly) (interchain with G-Cter in SUMO2)). Acidic residues predominate over residues 358–369; that stretch reads DIVDPNDSDVEE. The segment covering 372 to 396 has biased composition (low complexity); the sequence is SSKSDSEQPSPASSSSSSSSSFTPS. 2 positions are modified to phosphoserine: serine 413 and serine 420. Acidic residues predominate over residues 415 to 430; it reads DNEEESDEAEDNDNDS. The segment covering 446–462 has biased composition (low complexity); the sequence is VSLSDGSDSESSSASSP. Residue serine 484 is modified to Phosphoserine.

In terms of assembly, component of the super elongation complex (SEC), at least composed of EAF1, EAF2, CDK9, MLLT3/AF9, AFF (AFF1 or AFF4), the P-TEFb complex and ELL (ELL, ELL2 or ELL3). Interacts with BCOR. Interacts with CBX8. Interacts with ALKBH4. As to expression, ubiquitously expressed. Strong expression in the spleen.

It is found in the nucleus. The protein resides in the chromosome. Chromatin reader component of the super elongation complex (SEC), a complex required to increase the catalytic rate of RNA polymerase II transcription by suppressing transient pausing by the polymerase at multiple sites along the DNA. Specifically recognizes and binds acylated histone H3, with a preference for histone H3 that is crotonylated. Crotonylation marks active promoters and enhancers and confers resistance to transcriptional repressors. Recognizes and binds histone H3 crotonylated at 'Lys-9' (H3K9cr), and with slightly lower affinity histone H3 crotonylated at 'Lys-18' (H3K18cr). Also recognizes and binds histone H3 acetylated and butyrylated at 'Lys-9' (H3K9ac and H3K9bu, respectively), but with lower affinity than crotonylated histone H3. In the SEC complex, MLLT3 is required to recruit the complex to crotonylated histones. Recruitment of the SEC complex to crotonylated histones promotes recruitment of DOT1L on active chromatin to deposit histone H3 'Lys-79' methylation (H3K79me). Plays a key role in hematopoietic stem cell (HSC) maintenance by preserving, rather than conferring, HSC stemness. Acts by binding to the transcription start site of active genes in HSCs and sustaining level of H3K79me2, probably by recruiting DOT1L. The protein is Protein AF-9 (Mllt3) of Mus musculus (Mouse).